Reading from the N-terminus, the 301-residue chain is Transcription factor bHLH103 (301 aa).

A KRAB domain is found at 29 to 106 (PRSAEIVVDF…LEGLFDSSEQ (78 aa)). 2 disordered regions span residues 161-184 (EKSGELEDIESSQPLKRPRLETPS) and 239-272 (TSPHLNSIGSGEQKQWSDKSSNNTHNQNCSPRQD). Residues 180–229 (LETPSHFPSFKVRKEKLGDRITALQQLVSPFGKTDTASVLHDAIDYIKFL) enclose the bHLH domain. Polar residues predominate over residues 239–269 (TSPHLNSIGSGEQKQWSDKSSNNTHNQNCSP).

Homodimer. In terms of tissue distribution, mature root endodermis.

It is found in the nucleus. The chain is Transcription factor bHLH103 (BHLH103) from Arabidopsis thaliana (Mouse-ear cress).